A 365-amino-acid chain; its full sequence is Galactoside alpha-(1,2)-fucosyltransferase 1 (365 aa).

Topologically, residues 1–8 (MWPLSHRH) are cytoplasmic. Residues 9–25 (LCLAFLLVCVLSAISFF) form a helical; Signal-anchor for type II membrane protein membrane-spanning segment. At 26-365 (LHIYQDSIRH…LSSLWTLAEP (340 aa)) the chain is on the lumenal side. 3 N-linked (GlcNAc...) asparagine glycosylation sites follow: asparagine 65, asparagine 301, and asparagine 327.

It belongs to the glycosyltransferase 11 family.

The protein localises to the golgi apparatus. The protein resides in the golgi stack membrane. The enzyme catalyses a beta-D-galactosyl-(1-&gt;4)-N-acetyl-beta-D-glucosaminyl derivative + GDP-beta-L-fucose = an alpha-L-Fuc-(1-&gt;2)-beta-D-Gal-(1-&gt;4)-beta-D-GlcNAc derivative + GDP + H(+). It catalyses the reaction a ganglioside GA1 + GDP-beta-L-fucose = a ganglioside Fuc-GA1 + GDP + H(+). It carries out the reaction a beta-D-Gal-(1-&gt;3)-beta-D-GlcNAc-(1-&gt;3)-beta-D-Gal-(1-&gt;4)-beta-D-Glc-(1&lt;-&gt;1')-Cer(d18:1(4E)) + GDP-beta-L-fucose = alpha-L-fucosyl-(1-&gt;2)- beta-D-galactosyl-(1-&gt;3)-N-acetyl-beta-D-glucosaminyl-(1-&gt;3)-beta-D-galactosyl-(1-&gt;4)-beta-D-glucosyl-(1&lt;-&gt;1')-N-acylsphing-4-enine + GDP + H(+). The catalysed reaction is a neolactoside nLc4Cer(d18:1(4E)) + GDP-beta-L-fucose = a neolactoside IV(2)-alpha-Fuc-nLc4Cer(d18:1(4E)) + GDP + H(+). The enzyme catalyses a ganglioside GM1 + GDP-beta-L-fucose = a ganglioside Fuc-GM1 + GDP + H(+). It catalyses the reaction beta-D-galactosyl-(1-&gt;3)-N-acetyl-D-galactosamine + GDP-beta-L-fucose = alpha-L-fucosyl-(1-&gt;2)-beta-D-galactosyl-(1-&gt;3)-N-acetyl-D-galactosamine + GDP + H(+). It functions in the pathway protein modification; protein glycosylation. Functionally, catalyzes the transfer of L-fucose, from a guanosine diphosphate-beta-L-fucose, to the terminal galactose residue of glycoconjugates through an alpha(1,2) linkage leading to H antigen synthesis that is an intermediate substrate in the synthesis of ABO blood group antigens. H antigen is essential for maturation of the glomerular layer of the main olfactory bulb, in cell migration and early cell-cell contacts during tumor associated angiogenesis. Preferentially fucosylates soluble lactose and to a lesser extent fucosylates glycolipids gangliosides GA1 and GM1a. The polypeptide is Galactoside alpha-(1,2)-fucosyltransferase 1 (Leontocebus fuscicollis (Brown-mantled tamarin)).